A 541-amino-acid polypeptide reads, in one-letter code: uncharacterized protein (541 aa).

A run of 5 helical transmembrane segments spans residues F4–G23, F30–V47, V57–A79, L91–N113, and L156–A178. RCK C-terminal domains follow at residues Q187 to D271 and L273 to D354. Transmembrane regions (helical) follow at residues F362–L384, A389–S411, L424–F446, L456–Y478, and L516–F538.

This sequence belongs to the AAE transporter (TC 2.A.81) family.

The protein resides in the cell membrane. This is an uncharacterized protein from Corynebacterium diphtheriae (strain ATCC 700971 / NCTC 13129 / Biotype gravis).